Consider the following 162-residue polypeptide: NADH-quinone oxidoreductase subunit I (162 aa).

4Fe-4S ferredoxin-type domains are found at residues 52-82 (LRRY…IEAG) and 93-122 (TRYD…EGPN). Residues Cys-62, Cys-65, Cys-68, Cys-72, Cys-102, Cys-105, Cys-108, and Cys-112 each contribute to the [4Fe-4S] cluster site.

Belongs to the complex I 23 kDa subunit family. In terms of assembly, NDH-1 is composed of 14 different subunits. Subunits NuoA, H, J, K, L, M, N constitute the membrane sector of the complex. Requires [4Fe-4S] cluster as cofactor.

Its subcellular location is the cell inner membrane. It carries out the reaction a quinone + NADH + 5 H(+)(in) = a quinol + NAD(+) + 4 H(+)(out). Functionally, NDH-1 shuttles electrons from NADH, via FMN and iron-sulfur (Fe-S) centers, to quinones in the respiratory chain. The immediate electron acceptor for the enzyme in this species is believed to be ubiquinone. Couples the redox reaction to proton translocation (for every two electrons transferred, four hydrogen ions are translocated across the cytoplasmic membrane), and thus conserves the redox energy in a proton gradient. This is NADH-quinone oxidoreductase subunit I from Azorhizobium caulinodans (strain ATCC 43989 / DSM 5975 / JCM 20966 / LMG 6465 / NBRC 14845 / NCIMB 13405 / ORS 571).